A 435-amino-acid chain; its full sequence is Evolutionarily conserved signaling intermediate in Toll pathway, mitochondrial (435 aa).

Residues 1 to 48 constitute a mitochondrion transit peptide; that stretch reads MSWVQVNLLVRSLSRGWGGLCRPALSGTPFAQVSLQALRGLHCSAATH. Residue K372 forms a Glycyl lysine isopeptide (Lys-Gly) (interchain with G-Cter in ubiquitin) linkage. Positions 401–435 are disordered; it reads LTTSRLEGQSPPHSPPKGPEEDDETIQAEQQQGQS.

The protein belongs to the ECSIT family. In terms of assembly, interacts with MAP3K1, SMAD4 and TRAF6. Interacts with SMAD1 only after BMP4-treatment. Part of the mitochondrial complex I assembly/MCIA complex that comprises at least the core subunits TMEM126B, NDUFAF1, ECSIT and ACAD9 and complement subunits such as COA1 and TMEM186. Interacts with NDUFAF1. Interacts with ACAD9. Interacts with TRIM59. Interacts with TMEM70 and TMEM242. Interacts (when ubiquitinated) with NF-kappa-B subunits RELA and NFKB1. Interacts with RIGI, IFIT1 and MAVS; these interactions promote RLR-mediated type I IFN induction. Interacts with SQSTM1; this interaction inhibits TLR4 signaling via functional regulation of the TRAF6-ECSIT complex. Interacts with cereblon/CRBN; this interaction inhibits the ubiquitination of ECSIT. Ubiquitinated on Lys-372; leading to translocation in the nucleus together with RELA and NFKB1 and expression of NF-kappa-B-dependent genes. In terms of tissue distribution, detected in heart, brain, lung, liver, skeletal muscle, kidney and testis. Detected in embryonic mesoderm and epiblast, and in extraembryonic ectoderm.

Its subcellular location is the cytoplasm. The protein localises to the nucleus. The protein resides in the mitochondrion. Functionally, adapter protein that plays a role in different signaling pathways including TLRs and IL-1 pathways or innate antiviral induction signaling. Plays a role in the activation of NF-kappa-B by forming a signal complex with TRAF6 and TAK1/MAP3K7 to activate TAK1/MAP3K7 leading to activation of IKKs. Once ubiquitinated, interacts with the dissociated RELA and NFKB1 proteins and translocates to the nucleus where it induces NF-kappa-B-dependent gene expression. Plays a role in innate antiviral immune response by bridging the pattern recognition receptors RIGI and MDA5/IFIT1 to the MAVS complex at the mitochondrion. Promotes proteolytic activation of MAP3K1. Involved in the BMP signaling pathway. Required for normal embryonic development. As part of the MCIA complex, involved in the assembly of the mitochondrial complex I. The protein is Evolutionarily conserved signaling intermediate in Toll pathway, mitochondrial of Mus musculus (Mouse).